The primary structure comprises 432 residues: Protein RETICULATA, chloroplastic (432 aa).

The N-terminal 47 residues, 1 to 47, are a transit peptide targeting the chloroplast; it reads MAGCAMNLQFSSVVKVRNEISSFGICNRDFVFRDLAKAMKVPVLRIR. Residues 109 to 140 form a disordered region; sequence GNVGDGFNGSDGNGGGGGGGNGGEGDGEGEDY. Residues 111 to 132 show a composition bias toward gly residues; sequence VGDGFNGSDGNGGGGGGGNGGE. A run of 2 helical transmembrane segments spans residues 249–269 and 322–342; these read LYVA…GMLA and IMYG…ANLI.

The protein belongs to the RETICULATA family. As to expression, highly expressed in the vasculature of developing leaf primordia, margins of fully expanded leaves, hydathodes of rosette of cauline leaves, basal region of the lamina, stipules, root tips, stamens and in the abscission zone of the funiculus.

The protein localises to the plastid. Its subcellular location is the chloroplast membrane. May play a role in leaf development. Required for leaf mesophyll cell division in the early stages of leaf organogenesis. Acts in a developmental pathway that involves PPT1/CUE1 but does not include ASE2/DOV1. This chain is Protein RETICULATA, chloroplastic, found in Arabidopsis thaliana (Mouse-ear cress).